The chain runs to 141 residues: Hemoglobin subunit alpha-D (141 aa).

In terms of domain architecture, Globin spans 1-141 (MLSADDKKII…VAAVLAEKYR (141 aa)). Positions 58 and 87 each coordinate heme b.

The protein belongs to the globin family. As to quaternary structure, heterotetramer of two alpha-D chains and two beta chains. In terms of tissue distribution, red blood cells.

Its function is as follows. Involved in oxygen transport from the lung to the various peripheral tissues. The protein is Hemoglobin subunit alpha-D (HBAD) of Anser indicus (Bar-headed goose).